Reading from the N-terminus, the 954-residue chain is Glycine dehydrogenase (decarboxylating) (954 aa).

Residue Lys704 is modified to N6-(pyridoxal phosphate)lysine.

This sequence belongs to the GcvP family. The glycine cleavage system is composed of four proteins: P, T, L and H. The cofactor is pyridoxal 5'-phosphate.

It carries out the reaction N(6)-[(R)-lipoyl]-L-lysyl-[glycine-cleavage complex H protein] + glycine + H(+) = N(6)-[(R)-S(8)-aminomethyldihydrolipoyl]-L-lysyl-[glycine-cleavage complex H protein] + CO2. The glycine cleavage system catalyzes the degradation of glycine. The P protein binds the alpha-amino group of glycine through its pyridoxal phosphate cofactor; CO(2) is released and the remaining methylamine moiety is then transferred to the lipoamide cofactor of the H protein. This is Glycine dehydrogenase (decarboxylating) from Vibrio vulnificus (strain CMCP6).